The sequence spans 484 residues: Zinc metalloproteinase/disintegrin PMMP-2 (484 aa).

A signal peptide spans 1 to 20 (MIQVLLVTICLAVFPYQGSS). Positions 21–190 (IILESGNVDD…KASQLNLTPL (170 aa)) are excised as a propeptide. In terms of domain architecture, Peptidase M12B spans 197–395 (RYVKLAIVVD…YNPQCILNAP (199 aa)). Asn239 carries N-linked (GlcNAc...) asparagine glycosylation. Intrachain disulfides connect Cys308-Cys390, Cys352-Cys374, and Cys354-Cys357. His333 contributes to the Zn(2+) binding site. The active site involves Glu334. 2 residues coordinate Zn(2+): His337 and His343. A propeptide spanning residues 396-413 (LRTDTVSTPVSGNEFLEA) is cleaved from the precursor. The 82-residue stretch at 403–484 (TPVSGNEFLE…ADCPRNGLYG (82 aa)) folds into the Disintegrin domain. 6 disulfide bridges follow: Cys417-Cys432, Cys419-Cys427, Cys426-Cys449, Cys440-Cys446, Cys445-Cys470, and Cys458-Cys477. Positions 462-464 (RGD) match the Cell attachment site motif.

This sequence belongs to the venom metalloproteinase (M12B) family. P-II subfamily. P-IIa sub-subfamily. Monomer. It depends on Zn(2+) as a cofactor. As to expression, expressed by the venom gland.

The protein resides in the secreted. Its function is as follows. Impairs hemostasis in the envenomed animal. In terms of biological role, inhibits platelet aggregation induced by ADP, thrombin, platelet-activating factor and collagen. Acts by inhibiting fibrinogen interaction with platelet receptors GPIIb/GPIIIa (ITGA2B/ITGB3). This Protobothrops mucrosquamatus (Taiwan habu) protein is Zinc metalloproteinase/disintegrin PMMP-2.